Here is a 263-residue protein sequence, read N- to C-terminus: MACGDYDDKLSLDLIRDSLIRQEDTIIFNLIERIKFPINSTLYKKPSSWFPDFTGSLFQYLFQETEALQSKVGRYLSPEENPFFPDNLPASIVPPSKCPPVLHPVAESININEKILDVYLNQLLPLFCTEADEGNYATTAACDIQLLQAISRRIHYGKFVAEVKFRDCSDEYTPLILAQQDRDALMKLLTFEVVEEMVKKRVAKKAMIFGQEVTLVDNAKEVKCKVDPLLVSRLYDEWIMPLTKHVQVEYLLRRLDQNKLTSI.

Residues 3–256 enclose the Chorismate mutase domain; that stretch reads CGDYDDKLSL…QVEYLLRRLD (254 aa).

Homodimer. Expressed in root, stem, stigma, anther, leaf, petal tube, petal limb and sepal tissues with highest levels in petal tubes and stems.

It is found in the cytoplasm. It localises to the cytosol. The catalysed reaction is chorismate = prephenate. The protein operates within metabolic intermediate biosynthesis; prephenate biosynthesis; prephenate from chorismate: step 1/1. No allosteric regulation. Its function is as follows. Mediates the conversion of chorismate to prephenate. This is Chorismate mutase 2 from Petunia hybrida (Petunia).